The following is a 99-amino-acid chain: Sperm protein associated with the nucleus on the X chromosome N4 (99 aa).

The span at 1-10 shows a compositional bias: polar residues; that stretch reads MEEPTSSTNE. The tract at residues 1–99 is disordered; the sequence is MEEPTSSTNE…AGSPQDGGQN (99 aa). Positions 11 to 22 are enriched in basic and acidic residues; it reads NKMKSPCESNKR. Basic residues predominate over residues 23 to 32; that stretch reads KVDKKKKNLH. The segment covering 64-78 has biased composition (polar residues); sequence SNQLENNQPTESSTD.

The protein belongs to the SPAN-X family.

This is Sperm protein associated with the nucleus on the X chromosome N4 (SPANXN4) from Homo sapiens (Human).